A 794-amino-acid polypeptide reads, in one-letter code: Glutamine--tRNA ligase (794 aa).

The segment at 192–217 (DNEKPKKKKEKPAKVEDKAAPVATSE) is disordered. The 'HIGH' region motif lies at 277 to 287 (PEPNGYLHIGH). Residues 278–280 (EPN) and 284–290 (HIGHAKA) contribute to the ATP site. L-glutamine-binding residues include Asp-310 and Tyr-450. ATP-binding positions include Thr-469, 498-499 (RL), and 506-508 (MSK). The short motif at 505-509 (VMSKR) is the 'KMSKS' region element.

The protein belongs to the class-I aminoacyl-tRNA synthetase family.

The catalysed reaction is tRNA(Gln) + L-glutamine + ATP = L-glutaminyl-tRNA(Gln) + AMP + diphosphate. This chain is Glutamine--tRNA ligase, found in Lupinus luteus (European yellow lupine).